The primary structure comprises 209 residues: Ribosomal RNA large subunit methyltransferase E (209 aa).

Residues Gly-63, Trp-65, Asp-83, Asp-99, and Asp-124 each contribute to the S-adenosyl-L-methionine site. The active-site Proton acceptor is the Lys-164.

It belongs to the class I-like SAM-binding methyltransferase superfamily. RNA methyltransferase RlmE family.

Its subcellular location is the cytoplasm. The catalysed reaction is uridine(2552) in 23S rRNA + S-adenosyl-L-methionine = 2'-O-methyluridine(2552) in 23S rRNA + S-adenosyl-L-homocysteine + H(+). Its function is as follows. Specifically methylates the uridine in position 2552 of 23S rRNA at the 2'-O position of the ribose in the fully assembled 50S ribosomal subunit. The sequence is that of Ribosomal RNA large subunit methyltransferase E from Vibrio atlanticus (strain LGP32) (Vibrio splendidus (strain Mel32)).